The following is a 227-amino-acid chain: UPF0173 metal-dependent hydrolase BCB4264_A4722 (227 aa).

Belongs to the UPF0173 family.

The chain is UPF0173 metal-dependent hydrolase BCB4264_A4722 from Bacillus cereus (strain B4264).